A 577-amino-acid chain; its full sequence is Arginine--tRNA ligase (577 aa).

Residues 122–132 (PNVAKEMHVGH) carry the 'HIGH' region motif.

The protein belongs to the class-I aminoacyl-tRNA synthetase family. Monomer.

The protein resides in the cytoplasm. It catalyses the reaction tRNA(Arg) + L-arginine + ATP = L-arginyl-tRNA(Arg) + AMP + diphosphate. The sequence is that of Arginine--tRNA ligase from Aliivibrio fischeri (strain MJ11) (Vibrio fischeri).